The following is a 1194-amino-acid chain: IQ motif and SEC7 domain-containing protein 3 (1194 aa).

Residues 20 to 56 adopt a coiled-coil conformation; it reads AIVQNQQSLIHTQRQRIDELERRLDELSAENRSLWEH. 2 disordered regions span residues 62–149 and 229–272; these read AQPP…EKER and GRPS…QQPA. Residues 63–78 are compositionally biased toward pro residues; sequence QPPPGLVPPPSAPLPA. Positions 79–92 are enriched in low complexity; that stretch reads PAATAPAATAAQEP. Polar residues predominate over residues 122–133; it reads PSSRVQTPQSPH. A Phosphoserine modification is found at Ser255. The IQ domain occupies 311–340; it reads SRRAACTIQTAFRQYQLSKNFEKIRNSLLE. Disordered stretches follow at residues 439-471 and 515-610; these read SAGQ…QGHS and PAAV…KSAK. Composition is skewed to low complexity over residues 561–572 and 600–610; these read VAEAVVEEAVAT and SSSSASTKSAK. The 194-residue stretch at 646–839 folds into the SEC7 domain; sequence TLSTDTLRKR…VGIYERIQQK (194 aa). One can recognise a PH domain in the interval 852-985; that stretch reads TKVEKSIVGM…LKESIAEVTE (134 aa). Disordered stretches follow at residues 1002-1099 and 1137-1175; these read KTLS…PTPP and SSDS…HQFC. Over residues 1024–1035 the composition is skewed to basic and acidic residues; the sequence is AKREAMAGEKAT. Residues 1036 to 1052 are compositionally biased toward polar residues; sequence ESSGEVSIHNRLQTFQH. Pro residues-rich tracts occupy residues 1064 to 1099 and 1159 to 1169; these read APSP…PTPP and PPLPPPPPPYN.

It belongs to the BRAG family. As to quaternary structure, interacts with DLG1 and DLG4. Interacts with GPHN. In terms of tissue distribution, expressed in brain. Localized to dendrites, as well as somas of neuronal cells.

It is found in the cytoplasm. It localises to the postsynaptic density. In terms of biological role, acts as a guanine nucleotide exchange factor (GEF) for ARF1. The chain is IQ motif and SEC7 domain-containing protein 3 (Iqsec3) from Rattus norvegicus (Rat).